The chain runs to 330 residues: Glucokinase (330 aa).

14 to 19 (ADIGGT) is an ATP binding site.

It belongs to the bacterial glucokinase family.

It is found in the cytoplasm. The enzyme catalyses D-glucose + ATP = D-glucose 6-phosphate + ADP + H(+). The chain is Glucokinase from Colwellia psychrerythraea (strain 34H / ATCC BAA-681) (Vibrio psychroerythus).